The sequence spans 158 residues: 6,7-dimethyl-8-ribityllumazine synthase (158 aa).

5-amino-6-(D-ribitylamino)uracil contacts are provided by residues F22, 57–59, and 81–83; these read AVE and AVI. 86–87 lines the (2S)-2-hydroxy-3-oxobutyl phosphate pocket; that stretch reads GT. H89 acts as the Proton donor in catalysis. F114 is a 5-amino-6-(D-ribitylamino)uracil binding site. R128 lines the (2S)-2-hydroxy-3-oxobutyl phosphate pocket.

Belongs to the DMRL synthase family. Forms an icosahedral capsid composed of 60 subunits, arranged as a dodecamer of pentamers.

The enzyme catalyses (2S)-2-hydroxy-3-oxobutyl phosphate + 5-amino-6-(D-ribitylamino)uracil = 6,7-dimethyl-8-(1-D-ribityl)lumazine + phosphate + 2 H2O + H(+). It functions in the pathway cofactor biosynthesis; riboflavin biosynthesis; riboflavin from 2-hydroxy-3-oxobutyl phosphate and 5-amino-6-(D-ribitylamino)uracil: step 1/2. Functionally, catalyzes the formation of 6,7-dimethyl-8-ribityllumazine by condensation of 5-amino-6-(D-ribitylamino)uracil with 3,4-dihydroxy-2-butanone 4-phosphate. This is the penultimate step in the biosynthesis of riboflavin. This is 6,7-dimethyl-8-ribityllumazine synthase from Shewanella loihica (strain ATCC BAA-1088 / PV-4).